Reading from the N-terminus, the 688-residue chain is DNA ligase (688 aa).

Residues 38-42 (DEEYD), 87-88 (SL), and Glu-118 contribute to the NAD(+) site. The active-site N6-AMP-lysine intermediate is the Lys-120. Residues Arg-141, Glu-175, Lys-291, and Lys-315 each coordinate NAD(+). Cys-409, Cys-412, Cys-428, and Cys-433 together coordinate Zn(2+). Positions 590 to 679 (MKLDILKGLT…AELKGYNFDE (90 aa)) constitute a BRCT domain.

The protein belongs to the NAD-dependent DNA ligase family. LigA subfamily. Mg(2+) is required as a cofactor. It depends on Mn(2+) as a cofactor.

It catalyses the reaction NAD(+) + (deoxyribonucleotide)n-3'-hydroxyl + 5'-phospho-(deoxyribonucleotide)m = (deoxyribonucleotide)n+m + AMP + beta-nicotinamide D-nucleotide.. In terms of biological role, DNA ligase that catalyzes the formation of phosphodiester linkages between 5'-phosphoryl and 3'-hydroxyl groups in double-stranded DNA using NAD as a coenzyme and as the energy source for the reaction. It is essential for DNA replication and repair of damaged DNA. The polypeptide is DNA ligase (Thermotoga petrophila (strain ATCC BAA-488 / DSM 13995 / JCM 10881 / RKU-1)).